The sequence spans 287 residues: Nucleotide-binding protein Gbem_0872 (287 aa).

8 to 15 lines the ATP pocket; it reads GLSGSGKS. GTP is bound at residue 59–62; it reads DIRS.

This sequence belongs to the RapZ-like family.

Its function is as follows. Displays ATPase and GTPase activities. The chain is Nucleotide-binding protein Gbem_0872 from Citrifermentans bemidjiense (strain ATCC BAA-1014 / DSM 16622 / JCM 12645 / Bem) (Geobacter bemidjiensis).